Reading from the N-terminus, the 394-residue chain is Obg-like ATPase 1 (394 aa).

The region spanning 25-282 (LKIGIVGLPN…MPPDEAAKYC (258 aa)) is the OBG-type G domain. ATP is bound by residues 34-39 (NVGKST), 56-60 (FCTID), and 94-97 (DIAG). Mg(2+) contacts are provided by serine 38 and threonine 58. Position 129 (phenylalanine 129) interacts with GTP. Residues 230–231 (NM), methionine 231, and 263–265 (SCA) each bind ATP. Position 263–265 (263–265 (SCA)) interacts with GTP. Residues 303–386 (HLIYFFTAGP…QDADIIFFKF (84 aa)) enclose the TGS domain.

The protein belongs to the TRAFAC class OBG-HflX-like GTPase superfamily. OBG GTPase family. YchF/OLA1 subfamily. In terms of assembly, monomer (Potential). Interacts with GAP1. Mg(2+) serves as cofactor.

It localises to the cytoplasm. The protein localises to the cell membrane. Its subcellular location is the cytosol. With respect to regulation, activated by GAP1. In terms of biological role, hydrolyzes ATP, and can also hydrolyze GTP with lower efficiency. Has lower affinity for GTP (Potential). Exhibits GTPase activity. Exhibits similar binding affinities and hydrolytic activities toward both GTP and ATP. Binds to the 26 S ribosomal RNA in vitro, but not to the 5.8 S or 18 S rRNA. Confers sensitivity to salinity stress by suppressing the anti-oxidation enzymatic activities and increasing lipid peroxidation thus leading to the accumulation of reactive oxygen species (ROS). This is Obg-like ATPase 1 from Oryza sativa subsp. indica (Rice).